The sequence spans 352 residues: Histidinol-phosphate aminotransferase (352 aa).

Lys216 bears the N6-(pyridoxal phosphate)lysine mark.

It belongs to the class-II pyridoxal-phosphate-dependent aminotransferase family. Histidinol-phosphate aminotransferase subfamily. It depends on pyridoxal 5'-phosphate as a cofactor.

The catalysed reaction is L-histidinol phosphate + 2-oxoglutarate = 3-(imidazol-4-yl)-2-oxopropyl phosphate + L-glutamate. It participates in amino-acid biosynthesis; L-histidine biosynthesis; L-histidine from 5-phospho-alpha-D-ribose 1-diphosphate: step 7/9. In Methanoculleus marisnigri (strain ATCC 35101 / DSM 1498 / JR1), this protein is Histidinol-phosphate aminotransferase.